Consider the following 382-residue polypeptide: Opsin Rh5 (382 aa).

At Met1–Ile49 the chain is on the extracellular side. Asn14 is a glycosylation site (N-linked (GlcNAc...) asparagine). A helical transmembrane segment spans residues Tyr50–Ile76. The Cytoplasmic segment spans residues Phe77–Asn88. Residues Leu89 to Ala112 form a helical membrane-spanning segment. Over Thr113 to Tyr127 the chain is Extracellular. Cys124 and Cys201 form a disulfide bridge. Residues Ala128 to Phe147 form a helical membrane-spanning segment. Residues Asp148–Gln165 lie on the Cytoplasmic side of the membrane. Residues Ile166–Gly190 form a helical membrane-spanning segment. At Arg191–Leu214 the chain is on the extracellular side. Residues Phe215–Val242 traverse the membrane as a helical segment. Topologically, residues Arg243 to Lys278 are cytoplasmic. Residues Ala279–Cys302 traverse the membrane as a helical segment. The Extracellular segment spans residues Phe303–Thr310. Residues Pro311 to Ser335 form a helical membrane-spanning segment. Residue Lys322 is modified to N6-(retinylidene)lysine. At His336 to Asn382 the chain is on the cytoplasmic side. Residues Ala357 to Asn382 form a disordered region. Positions Thr358–Asn382 are enriched in polar residues.

The protein belongs to the G-protein coupled receptor 1 family. Opsin subfamily. In terms of processing, phosphorylated on some or all of the serine and threonine residues present in the C-terminal region. Expressed specifically in the retina. Each Drosophila eye is composed of 800 facets or ommatidia. Each ommatidium contains 8 photoreceptor cells (R1-R8), the R1 to R6 cells are outer cells, while R7 and R8 are inner cells. Rh5 is expressed only in R8 photoreceptor cells in a subset of ommatidia.

It localises to the cell projection. The protein resides in the rhabdomere membrane. Functionally, visual pigments are the light-absorbing molecules that mediate vision. They consist of an apoprotein, opsin, covalently linked to cis-retinal. The protein is Opsin Rh5 (Rh5) of Drosophila melanogaster (Fruit fly).